The sequence spans 247 residues: ATP synthase subunit a, chloroplastic (247 aa).

A run of 5 helical transmembrane segments spans residues 38-58 (QVLI…ILVV), 95-115 (VPFI…GALL), 134-154 (INTT…AGIS), 199-219 (LVVV…VMFL), and 220-240 (GLFT…AYIG).

It belongs to the ATPase A chain family. As to quaternary structure, F-type ATPases have 2 components, CF(1) - the catalytic core - and CF(0) - the membrane proton channel. CF(1) has five subunits: alpha(3), beta(3), gamma(1), delta(1), epsilon(1). CF(0) has four main subunits: a, b, b' and c.

It is found in the plastid. It localises to the chloroplast thylakoid membrane. Its function is as follows. Key component of the proton channel; it plays a direct role in the translocation of protons across the membrane. The sequence is that of ATP synthase subunit a, chloroplastic from Lotus japonicus (Lotus corniculatus var. japonicus).